The chain runs to 166 residues: Interferon gamma (166 aa).

The N-terminal stretch at 1–23 is a signal peptide; that stretch reads MNYTSFILAFQLCAILGSSTYYC. Q24 is subject to Pyrrolidone carboxylic acid. N-linked (GlcNAc...) asparagine glycans are attached at residues N39 and N106. The tract at residues 147–166 is disordered; sequence ANLRKRKRSQNPFRGRRALQ. Residues 148–166 show a composition bias toward basic residues; sequence NLRKRKRSQNPFRGRRALQ.

The protein belongs to the type II (or gamma) interferon family. Homodimer. Interacts with IFNGR1 (via extracellular domain); this interaction promotes IFNGR1 dimerization. As to expression, released primarily from activated T lymphocytes.

The protein localises to the secreted. Its function is as follows. Type II interferon produced by immune cells such as T-cells and NK cells that plays crucial roles in antimicrobial, antiviral, and antitumor responses by activating effector immune cells and enhancing antigen presentation. Primarily signals through the JAK-STAT pathway after interaction with its receptor IFNGR1 to affect gene regulation. Upon IFNG binding, IFNGR1 intracellular domain opens out to allow association of downstream signaling components JAK2, JAK1 and STAT1, leading to STAT1 activation, nuclear translocation and transcription of IFNG-regulated genes. Many of the induced genes are transcription factors such as IRF1 that are able to further drive regulation of a next wave of transcription. Plays a role in class I antigen presentation pathway by inducing a replacement of catalytic proteasome subunits with immunoproteasome subunits. In turn, increases the quantity, quality, and repertoire of peptides for class I MHC loading. Increases the efficiency of peptide generation also by inducing the expression of activator PA28 that associates with the proteasome and alters its proteolytic cleavage preference. Up-regulates as well MHC II complexes on the cell surface by promoting expression of several key molecules such as cathepsins B/CTSB, H/CTSH, and L/CTSL. Participates in the regulation of hematopoietic stem cells during development and under homeostatic conditions by affecting their development, quiescence, and differentiation. This Equus asinus (Donkey) protein is Interferon gamma (IFNG).